The following is a 431-amino-acid chain: uncharacterized protein (431 aa).

The next 12 membrane-spanning stretches (helical) occupy residues 33–53 (VARVGTAAAVTALCGYAVIYL), 63–83 (FSVFGVFWGAFGLVTGAANGL), 111–131 (VSGMVGLGSLVVIAGSSPLWS), 143–163 (VALLSIGLAGFCLHATLLGML), 175–195 (LMVADAVIRVVVAAATFVIGW), 197–217 (LVGFIWATVAGSVAWLIMLMT), 241–261 (AHSIIAAGASAILVMGFPVLL), 273–293 (GVVILAVTLTRAPLLVPLTAM), 318–338 (LIGGVGAVGMLAAGVVGPWIM), 358–378 (AAAVAIAMLTLTGAAAVAAAL), 381–401 (AYSLGWVGATVGSGLLLLLPL), and 407–427 (TVVALLCGPLVGIGVHLVALA).

It to M.tuberculosis Rv1510 and M.bovis Mb3654.

Its subcellular location is the cell membrane. This is an uncharacterized protein from Mycobacterium tuberculosis (strain ATCC 25618 / H37Rv).